The sequence spans 61 residues: MARKAMVVKQQRKQKYATREYTRCTICGRPHSVLKKFGICRICFRELAYKGQIPGVRKASW.

Residues cysteine 24, cysteine 27, cysteine 40, and cysteine 43 each contribute to the Zn(2+) site.

This sequence belongs to the universal ribosomal protein uS14 family. Zinc-binding uS14 subfamily. In terms of assembly, part of the 30S ribosomal subunit. Contacts proteins S3 and S10. It depends on Zn(2+) as a cofactor.

In terms of biological role, binds 16S rRNA, required for the assembly of 30S particles and may also be responsible for determining the conformation of the 16S rRNA at the A site. This chain is Small ribosomal subunit protein uS14, found in Clostridioides difficile (strain 630) (Peptoclostridium difficile).